A 71-amino-acid polypeptide reads, in one-letter code: Frenatin 2.3S (71 aa).

Residues 1–22 form the signal peptide; it reads MAFLKKSLFLVLFLGLVSLSMG. A disordered region spans residues 21-56; it reads MGEREKREEEEEEEEENKEEEANEEGKGESEEKRGL. Residues 23-54 constitute a propeptide that is removed on maturation; the sequence is EREKREEEEEEEEENKEEEANEEGKGESEEKR. A compositionally biased stretch (acidic residues) spans 28–43; that stretch reads EEEEEEEEENKEEEAN. Residues 44–55 are compositionally biased toward basic and acidic residues; that stretch reads EEGKGESEEKRG. A Glycine amide; in Frenatin 2.1S modification is found at G70.

It belongs to the frog skin active peptide (FSAP) family. Frenatin subfamily. Post-translationally, frenatin 2.3S is not amidated. Expressed by the skin glands.

Its subcellular location is the secreted. Functionally, antimicrobial peptide with potent activity against Gram-negative bacteria. Shows immunostimulatory actions both in vitro and in vivo. In vitro, is cytotoxic to non-small cell lung adenocarcinoma A549 cells. Also, stimulates production of pro-inflammatory cytokines by mouse peritoneal macrophages and down-regulates production of the anti-inflammatory cytokine IL-10 by lipopolysaccharide (LPS)-stimulated cells. In vivo, intraperitoneal injection in mice enhances the activation state and homing capacity of Th1 type lymphocytes and promotes the recruitment, activation and tumoricidal capacities of peritoneal NK cells. Has a very weak activity in stimulation of insulin release and a weak hemolytic activity. In terms of biological role, antimicrobial peptide with potent activity against some Gram-positive and Gram-negative bacteria. Has a multifunctional mode of action. It displays depolarization and bacterial cell leakage, and can also internalize into bacterial cells and alter specific gene expression involved in bacterial resistance mechanisms. Does not agglutinate bacteria and lipid vesicles, even a high concentrations. Also displays moderate cellular protection against yellow fever virus (YFV)-infected Vero cells without causing significant cytotoxicity. Shows a weak hemolytic activity, and is not cytotoxic to monocytes. Frenatin 2.3S (version without Gly-71) shows no or very weak antibacterial activity, shows no or very weak cytotoxicity to lung adenocarcinoma A549 cells and shows very weak hemolysis. It only stimulates production of pro-inflammatory cytokines IL-23 (but not IL-1beta and TNF-alpha) by mouse peritoneal macrophages and has no effect on the production of the anti-inflammatory cytokine IL-10. Frenatin 2.3S (version without Gly-71) very weakly stimulates insulin release. This chain is Frenatin 2.3S, found in Sphaenorhynchus lacteus (Orinoco lime treefrog).